The chain runs to 195 residues: Imidazoleglycerol-phosphate dehydratase (195 aa).

This sequence belongs to the imidazoleglycerol-phosphate dehydratase family.

Its subcellular location is the cytoplasm. The enzyme catalyses D-erythro-1-(imidazol-4-yl)glycerol 3-phosphate = 3-(imidazol-4-yl)-2-oxopropyl phosphate + H2O. It functions in the pathway amino-acid biosynthesis; L-histidine biosynthesis; L-histidine from 5-phospho-alpha-D-ribose 1-diphosphate: step 6/9. The sequence is that of Imidazoleglycerol-phosphate dehydratase from Ruegeria sp. (strain TM1040) (Silicibacter sp.).